The sequence spans 986 residues: Rho guanine nucleotide exchange factor 2 (986 aa).

The Phorbol-ester/DAG-type zinc finger occupies 39-86 (GHLFTTISVSGMTMCYACNKSITAKEALICPTCNVTIHNRCKDTLANC). Ser-109, Ser-122, Ser-129, Ser-133, and Ser-137 each carry phosphoserine. Residues 131-161 (RQSLLGSRRGRSSLSLAKSVSTTNIAGHFND) are interaction with DYNLT1. At Ser-143 the chain carries Phosphoserine; by PAK4. Ser-151, Ser-163, Ser-172, Ser-174, and Ser-177 each carry phosphoserine. The 198-residue stretch at 235–432 (KQQDVIYELI…KELLSNVDEG (198 aa)) folds into the DH domain. Lys-353 carries the post-translational modification N6-acetyllysine. Residues 472–571 (KLIHDGCLLW…WIRVIQQSVR (100 aa)) enclose the PH domain. The stretch at 587-611 (EAYLRRIKMELQQKDRALVELLREK) forms a coiled coil. Phosphoserine occurs at positions 645 and 648. Thr-679 is subject to Phosphothreonine; by MAPK1 or MAPK3. Residues 683-705 (PALPLEPDSGGNTSPGVTANGEA) are disordered. 4 positions are modified to phosphoserine: Ser-691, Ser-696, Ser-711, and Ser-782. A coiled-coil region spans residues 798–867 (EKQATELALL…RQLAALGQTE (70 aa)). Residues 862 to 986 (ALGQTEPLPA…RDGEAVASES (125 aa)) form a disordered region. Ser-886 is modified (phosphoserine; by PAK1 and AURKA). At Tyr-894 the chain carries Phosphotyrosine. Ser-896 is modified (phosphoserine; by PAK4). Basic and acidic residues predominate over residues 920-939 (RNFEDRERQELGSPEERLQD). 3 positions are modified to phosphoserine: Ser-932, Ser-940, and Ser-941. The span at 941 to 950 (SDPDTGSEEE) shows a compositional bias: acidic residues. Thr-945 carries the phosphothreonine modification. A phosphoserine mark is found at Ser-947, Ser-952, Ser-953, Ser-956, and Ser-960.

Found in a complex composed at least of ARHGEF2, NOD2 and RIPK2. Interacts with RIPK2; the interaction mediates tyrosine phosphorylation of RIPK2 by Src kinase CSK. Interacts with RIPK1 and RIPK3. Interacts with YWHAZ/14-3-3 zeta; when phosphorylated at Ser-886. Interacts with the kinases PAK4, AURKA and MAPK1. Interacts with RHOA and RAC1. Interacts with NOD1. Interacts (via the N-terminal zinc finger) with CAPN6 (via domain II). Interacts with DYNLT1. In terms of processing, phosphorylation of Ser-886 by PAK1 induces binding to protein YWHAZ, promoting its relocation to microtubules and the inhibition of its activity. Phosphorylated by AURKA and CDK1 during mitosis, which negatively regulates its activity. Phosphorylation by MAPK1 or MAPK3 increases nucleotide exchange activity. Phosphorylation by PAK4 releases GEF-H1 from the microtubules. Phosphorylated on serine, threonine and tyrosine residues in a RIPK2-dependent manner.

Its subcellular location is the cytoplasm. The protein localises to the cytoskeleton. It localises to the cell junction. It is found in the tight junction. The protein resides in the golgi apparatus. Its subcellular location is the spindle. The protein localises to the cell projection. It localises to the ruffle membrane. It is found in the cytoplasmic vesicle. Its function is as follows. Activates Rho-GTPases by promoting the exchange of GDP for GTP. May be involved in epithelial barrier permeability, cell motility and polarization, dendritic spine morphology, antigen presentation, leukemic cell differentiation, cell cycle regulation, innate immune response, and cancer. Binds Rac-GTPases, but does not seem to promote nucleotide exchange activity toward Rac-GTPases, which was uniquely reported in PubMed:9857026. May stimulate instead the cortical activity of Rac. Inactive toward CDC42, TC10, or Ras-GTPases. Forms an intracellular sensing system along with NOD1 for the detection of microbial effectors during cell invasion by pathogens. Required for RHOA and RIP2 dependent NF-kappaB signaling pathways activation upon S.flexneri cell invasion. Involved not only in sensing peptidoglycan (PGN)-derived muropeptides through NOD1 that is independent of its GEF activity, but also in the activation of NF-kappaB by Shigella effector proteins (IpgB2 and OspB) which requires its GEF activity and the activation of RhoA. Involved in innate immune signaling transduction pathway promoting cytokine IL6/interleukin-6 and TNF-alpha secretion in macrophage upon stimulation by bacterial peptidoglycans; acts as a signaling intermediate between NOD2 receptor and RIPK2 kinase. Contributes to the tyrosine phosphorylation of RIPK2 through Src tyrosine kinase leading to NF-kappaB activation by NOD2. Overexpression activates Rho-, but not Rac-GTPases, and increases paracellular permeability. Involved in neuronal progenitor cell division and differentiation. Involved in the migration of precerebellar neurons. The chain is Rho guanine nucleotide exchange factor 2 (ARHGEF2) from Homo sapiens (Human).